Here is a 139-residue protein sequence, read N- to C-terminus: NAD(P) transhydrogenase subunit alpha part 2 (139 aa).

The next 3 membrane-spanning stretches (helical) occupy residues 49–69 (FWWL…VVWS), 78–98 (LMGV…IATG), and 107–127 (VLGF…FIVT).

In terms of assembly, complex of an alpha and a beta chain; in Rhodospirillum, the alpha chain seems to be made of two subunits.

The protein resides in the cell inner membrane. The catalysed reaction is NAD(+) + NADPH + H(+)(in) = NADH + NADP(+) + H(+)(out). Its function is as follows. The transhydrogenation between NADH and NADP is coupled to respiration and ATP hydrolysis and functions as a proton pump across the membrane. The polypeptide is NAD(P) transhydrogenase subunit alpha part 2 (pntAB) (Rhodospirillum rubrum (strain ATCC 11170 / ATH 1.1.1 / DSM 467 / LMG 4362 / NCIMB 8255 / S1)).